The following is a 332-amino-acid chain: Small ribosomal subunit protein uS2 (332 aa).

Belongs to the universal ribosomal protein uS2 family.

This Afipia carboxidovorans (strain ATCC 49405 / DSM 1227 / KCTC 32145 / OM5) (Oligotropha carboxidovorans) protein is Small ribosomal subunit protein uS2.